We begin with the raw amino-acid sequence, 68 residues long: Large ribosomal subunit protein uL29c (68 aa).

Belongs to the universal ribosomal protein uL29 family.

It is found in the plastid. It localises to the chloroplast. The polypeptide is Large ribosomal subunit protein uL29c (Pyropia yezoensis (Susabi-nori)).